The sequence spans 2028 residues: Protein Daple (2028 aa).

Positions 11–131 (LFLQSPLVTW…KVLLLVLGCA (121 aa)) constitute a Calponin-homology (CH) domain. A disordered region spans residues 222 to 250 (AQHPPSPIKSSSADSTPSPTSSLSSEDKQ). S227 and S239 each carry phosphoserine. Residues 229-245 (IKSSSADSTPSPTSSLS) show a composition bias toward low complexity. Coiled-coil stretches lie at residues 247 to 428 (EDKQ…SMNE), 456 to 1017 (ELNE…QGEG), 1045 to 1094 (HKEA…SSQI), and 1139 to 1393 (LQNH…DQYK). The residue at position 486 (S486) is a Phosphoserine. The span at 1011–1024 (RQNQGEGQHLQNSF) shows a compositional bias: polar residues. Residues 1011–1043 (RQNQGEGQHLQNSFKHPAGKTAASHQGKEAWGP) are disordered. The span at 1419 to 1428 (KEGSRERLKS) shows a compositional bias: basic and acidic residues. Disordered regions lie at residues 1419-1724 (KEGS…GAKM) and 1736-1803 (AAPT…SLSR). Low complexity-rich tracts occupy residues 1439–1450 (SSDPASPAASQP), 1517–1534 (SRTC…NSTP), and 1568–1588 (SRPS…PLNL). A Phosphoserine modification is found at S1444. Residues 1589-1604 (KGSSEQLHGRSESFSS) are compositionally biased toward polar residues. Residue S1601 is modified to Phosphoserine. A GBA motif is present at residues 1661–1691 (CSASPSSEMVTLEEFLEESNRSSPTHDTPSC). Over residues 1689 to 1704 (PSCRDDLLSDYFRKAS) the composition is skewed to basic and acidic residues. Over residues 1792–1803 (HAPASRSASLSR) the composition is skewed to low complexity. S1806 carries the phosphoserine modification. The interval 1816-2021 (SGPEACKQES…PEPGGDPQTV (206 aa)) is disordered. Residues 1842 to 1855 (SHTLQSPAPPSSHS) show a composition bias toward polar residues. Residues 1879-1897 (RPLDTRRFSLAPPKEERLA) are compositionally biased toward basic and acidic residues. Positions 1902–1924 (SATAPAIATAGAGAAAAGSGSNS) are enriched in low complexity. The residue at position 1954 (T1954) is a Phosphothreonine. Positions 2025-2028 (YGCV) match the PDZ-binding motif. Residues 2026–2028 (GCV) form a DVL1-binding region.

This sequence belongs to the CCDC88 family. As to quaternary structure, homooligomer. Interacts with DVL1 (via PDZ domain); dissociates following initiation of non-canonical Wnt signaling. Interacts (via C-terminus) with ligand-activated Wnt receptor FZD7; competes with DVL1 for binding to FZD7 and displaces DVL1 from ligand-activated FZD7. Interacts (via GBA motif) with guanine nucleotide-binding protein G(i) alpha subunits GNAI1, GNAI2 and GNAI3 (inactive GDP-bound form); interacts with higher affinity with GNAI1 and GNAI3 than with GNAI2 and interaction leads to G(i) alpha subunit activation. Does not interact with GNAO1.

The protein resides in the cytoplasm. The protein localises to the cell junction. In terms of biological role, required for activation of guanine nucleotide-binding proteins (G-proteins) during non-canonical Wnt signaling. Binds to ligand-activated Wnt receptor FZD7, displacing DVL1 from the FZD7 receptor and leading to inhibition of canonical Wnt signaling. Acts as a non-receptor guanine nucleotide exchange factor by also binding to guanine nucleotide-binding protein G(i) alpha (Gi-alpha) subunits, leading to their activation. Binding to Gi-alpha subunits displaces the beta and gamma subunits from the heterotrimeric G-protein complex, triggering non-canonical Wnt responses such as activation of RAC1 and PI3K-AKT signaling. Promotes apical constriction of cells via ARHGEF18. In Homo sapiens (Human), this protein is Protein Daple (CCDC88C).